Here is a 254-residue protein sequence, read N- to C-terminus: 3-deoxy-manno-octulosonate cytidylyltransferase (254 aa).

The protein belongs to the KdsB family.

The protein localises to the cytoplasm. It catalyses the reaction 3-deoxy-alpha-D-manno-oct-2-ulosonate + CTP = CMP-3-deoxy-beta-D-manno-octulosonate + diphosphate. The protein operates within nucleotide-sugar biosynthesis; CMP-3-deoxy-D-manno-octulosonate biosynthesis; CMP-3-deoxy-D-manno-octulosonate from 3-deoxy-D-manno-octulosonate and CTP: step 1/1. It functions in the pathway bacterial outer membrane biogenesis; lipopolysaccharide biosynthesis. Activates KDO (a required 8-carbon sugar) for incorporation into bacterial lipopolysaccharide in Gram-negative bacteria. In Bordetella petrii (strain ATCC BAA-461 / DSM 12804 / CCUG 43448), this protein is 3-deoxy-manno-octulosonate cytidylyltransferase.